The sequence spans 258 residues: Pimeloyl-[acyl-carrier protein] methyl ester esterase (258 aa).

The AB hydrolase-1 domain maps to 16-242 (LVLLHGWGLN…AAHAPFISHP (227 aa)). Substrate-binding positions include W22, 82–83 (SM), and 143–147 (FLALQ). Catalysis depends on S82, which acts as the Nucleophile. Catalysis depends on residues D207 and H235. Residue H235 coordinates substrate.

Belongs to the AB hydrolase superfamily. Carboxylesterase BioH family. Monomer.

The protein localises to the cytoplasm. It carries out the reaction 6-carboxyhexanoyl-[ACP] methyl ester + H2O = 6-carboxyhexanoyl-[ACP] + methanol + H(+). The protein operates within cofactor biosynthesis; biotin biosynthesis. Functionally, the physiological role of BioH is to remove the methyl group introduced by BioC when the pimeloyl moiety is complete. It allows to synthesize pimeloyl-ACP via the fatty acid synthetic pathway through the hydrolysis of the ester bonds of pimeloyl-ACP esters. The sequence is that of Pimeloyl-[acyl-carrier protein] methyl ester esterase from Yersinia pseudotuberculosis serotype IB (strain PB1/+).